We begin with the raw amino-acid sequence, 207 residues long: Sodium/potassium-transporting ATPase subunit beta-1-interacting protein 1 (207 aa).

Transmembrane regions (helical) follow at residues 2–22 (GRCS…AAAL), 35–55 (APIL…LGTL), and 62–82 (LILY…IICF). An N-linked (GlcNAc...) asparagine glycan is attached at Asn100. A helical membrane pass occupies residues 147–167 (ALSSALQIFLALFGFVYACYV).

It belongs to the NKAIN family. Interacts with atp1b1 C-terminus.

It is found in the cell membrane. This Xenopus laevis (African clawed frog) protein is Sodium/potassium-transporting ATPase subunit beta-1-interacting protein 1 (nkain1).